The following is a 271-amino-acid chain: Formamidopyrimidine-DNA glycosylase (271 aa).

Pro2 functions as the Schiff-base intermediate with DNA in the catalytic mechanism. Glu3 (proton donor) is an active-site residue. Catalysis depends on Lys57, which acts as the Proton donor; for beta-elimination activity. The DNA site is built by His90, Arg109, and Lys151. The segment at 236-270 adopts an FPG-type zinc-finger fold; that stretch reads HVYGRGGETCTQCGNLLSEIRLGQRTTVFCGICQT. Arg260 serves as the catalytic Proton donor; for delta-elimination activity.

It belongs to the FPG family. In terms of assembly, monomer. The cofactor is Zn(2+).

The enzyme catalyses Hydrolysis of DNA containing ring-opened 7-methylguanine residues, releasing 2,6-diamino-4-hydroxy-5-(N-methyl)formamidopyrimidine.. The catalysed reaction is 2'-deoxyribonucleotide-(2'-deoxyribose 5'-phosphate)-2'-deoxyribonucleotide-DNA = a 3'-end 2'-deoxyribonucleotide-(2,3-dehydro-2,3-deoxyribose 5'-phosphate)-DNA + a 5'-end 5'-phospho-2'-deoxyribonucleoside-DNA + H(+). Functionally, involved in base excision repair of DNA damaged by oxidation or by mutagenic agents. Acts as a DNA glycosylase that recognizes and removes damaged bases. Has a preference for oxidized purines, such as 7,8-dihydro-8-oxoguanine (8-oxoG). Has AP (apurinic/apyrimidinic) lyase activity and introduces nicks in the DNA strand. Cleaves the DNA backbone by beta-delta elimination to generate a single-strand break at the site of the removed base with both 3'- and 5'-phosphates. This Shewanella sp. (strain MR-7) protein is Formamidopyrimidine-DNA glycosylase.